Reading from the N-terminus, the 273-residue chain is Thiazole synthase (273 aa).

Lys-110 (schiff-base intermediate with DXP) is an active-site residue. 1-deoxy-D-xylulose 5-phosphate-binding positions include Gly-171, 198-199, and 220-221; these read AG and NS.

The protein belongs to the ThiG family. In terms of assembly, homotetramer. Forms heterodimers with either ThiH or ThiS.

The protein localises to the cytoplasm. It catalyses the reaction [ThiS sulfur-carrier protein]-C-terminal-Gly-aminoethanethioate + 2-iminoacetate + 1-deoxy-D-xylulose 5-phosphate = [ThiS sulfur-carrier protein]-C-terminal Gly-Gly + 2-[(2R,5Z)-2-carboxy-4-methylthiazol-5(2H)-ylidene]ethyl phosphate + 2 H2O + H(+). It functions in the pathway cofactor biosynthesis; thiamine diphosphate biosynthesis. Catalyzes the rearrangement of 1-deoxy-D-xylulose 5-phosphate (DXP) to produce the thiazole phosphate moiety of thiamine. Sulfur is provided by the thiocarboxylate moiety of the carrier protein ThiS. In vitro, sulfur can be provided by H(2)S. The sequence is that of Thiazole synthase from Hydrogenovibrio crunogenus (strain DSM 25203 / XCL-2) (Thiomicrospira crunogena).